Here is a 1812-residue protein sequence, read N- to C-terminus: Protein virilizer homolog (1812 aa).

Position 2 is an N-acetylalanine (Ala2). 2 disordered regions span residues Ile132–Ser302 and Lys576–Arg596. A phosphoserine mark is found at Ser133 and Ser138. Residues Pro139–Gln152 are compositionally biased toward pro residues. The span at Lys160–Gln169 shows a compositional bias: basic and acidic residues. Ser173 is subject to Phosphoserine. The segment covering Pro174–Pro190 has biased composition (pro residues). Thr184 bears the Phosphothreonine mark. A Phosphoserine modification is found at Ser222. Residues Asp224–Gln233 show a composition bias toward polar residues. Composition is skewed to acidic residues over residues Tyr234–Asp266 and Ile274–Ser302. A compositionally biased stretch (basic and acidic residues) spans Ser584–Arg596. The residue at position 914 (Tyr914) is a Phosphotyrosine. Ser1579 bears the Phosphoserine mark. Disordered regions lie at residues His1616–Pro1635 and Lys1663–Arg1812. Residues Gly1689–Gly1698 show a composition bias toward gly residues. Residue Thr1708 is modified to Phosphothreonine. Position 1723 is an omega-N-methylarginine (Arg1723). Over residues Arg1723–Asn1748 the composition is skewed to polar residues. Position 1741 is an asymmetric dimethylarginine; alternate (Arg1741). Omega-N-methylarginine; alternate is present on Arg1741. 3 positions are modified to asymmetric dimethylarginine: Arg1773, Arg1775, and Arg1793. A compositionally biased stretch (gly residues) spans Gly1788–Gly1802. The span at Arg1803–Arg1812 shows a compositional bias: basic residues.

This sequence belongs to the vir family. In terms of assembly, component of the WMM complex, a N6-methyltransferase complex composed of a catalytic subcomplex, named MAC, and of an associated subcomplex, named MACOM. The MAC subcomplex is composed of METTL3 and METTL14. The MACOM subcomplex is composed of WTAP, ZC3H13, CBLL1/HAKAI, VIRMA, and, in some cases of RBM15 (RBM15 or RBM15B). Interacts with WTAP. Also a component of a MACOM-like complex, named WTAP complex, composed of WTAP, ZC3H13, CBLL1, VIRMA, RBM15, BCLAF1 and THRAP3. Interacts with NUDT21 and CPSF6.

Its subcellular location is the nucleus speckle. The protein localises to the nucleus. It localises to the nucleoplasm. The protein resides in the cytoplasm. Its function is as follows. Associated component of the WMM complex, a complex that mediates N6-methyladenosine (m6A) methylation of RNAs, a modification that plays a role in the efficiency of mRNA splicing and RNA processing. Acts as a key regulator of m6A methylation by promoting m6A methylation of mRNAs in the 3'-UTR near the stop codon: recruits the catalytic core components METTL3 and METTL14, thereby guiding m6A methylation at specific sites. Required for mRNA polyadenylation via its role in selective m6A methylation: m6A methylation of mRNAs in the 3'-UTR near the stop codon correlating with alternative polyadenylation (APA). The protein is Protein virilizer homolog of Homo sapiens (Human).